We begin with the raw amino-acid sequence, 447 residues long: Na(+)-translocating NADH-quinone reductase subunit A (447 aa).

This sequence belongs to the NqrA family. In terms of assembly, composed of six subunits; NqrA, NqrB, NqrC, NqrD, NqrE and NqrF.

It catalyses the reaction a ubiquinone + n Na(+)(in) + NADH + H(+) = a ubiquinol + n Na(+)(out) + NAD(+). Functionally, NQR complex catalyzes the reduction of ubiquinone-1 to ubiquinol by two successive reactions, coupled with the transport of Na(+) ions from the cytoplasm to the periplasm. NqrA to NqrE are probably involved in the second step, the conversion of ubisemiquinone to ubiquinol. This is Na(+)-translocating NADH-quinone reductase subunit A from Yersinia pseudotuberculosis serotype O:1b (strain IP 31758).